Reading from the N-terminus, the 333-residue chain is Glycerol-3-phosphate dehydrogenase [NAD(P)+] (333 aa).

5 residues coordinate NADPH: Ser-10, Trp-11, His-31, Arg-32, and Lys-105. The sn-glycerol 3-phosphate site is built by Lys-105, Gly-136, and Ser-138. Ala-140 contacts NADPH. Sn-glycerol 3-phosphate-binding residues include Lys-191, Asp-244, Ser-254, Arg-255, and Asn-256. The Proton acceptor role is filled by Lys-191. Position 255 (Arg-255) interacts with NADPH. NADPH is bound by residues Val-279 and Glu-281.

This sequence belongs to the NAD-dependent glycerol-3-phosphate dehydrogenase family.

The protein localises to the cytoplasm. The catalysed reaction is sn-glycerol 3-phosphate + NAD(+) = dihydroxyacetone phosphate + NADH + H(+). It carries out the reaction sn-glycerol 3-phosphate + NADP(+) = dihydroxyacetone phosphate + NADPH + H(+). It functions in the pathway membrane lipid metabolism; glycerophospholipid metabolism. Functionally, catalyzes the reduction of the glycolytic intermediate dihydroxyacetone phosphate (DHAP) to sn-glycerol 3-phosphate (G3P), the key precursor for phospholipid synthesis. This Chlorobium limicola (strain DSM 245 / NBRC 103803 / 6330) protein is Glycerol-3-phosphate dehydrogenase [NAD(P)+].